The sequence spans 109 residues: Globin (109 aa).

A Globin domain is found at 3 to 109 (PLTAAEVSSL…IFPIAGIHAL (107 aa)).

This sequence belongs to the globin family. Monomer.

Oxygen binding protein. The protein is Globin of Dicrocoelium dendriticum (Small liver fluke).